A 464-amino-acid chain; its full sequence is Soluble pyridine nucleotide transhydrogenase (464 aa).

35-44 is an FAD binding site; the sequence is DSRRQVGGNC.

The protein belongs to the class-I pyridine nucleotide-disulfide oxidoreductase family. FAD serves as cofactor.

It is found in the cytoplasm. It carries out the reaction NAD(+) + NADPH = NADH + NADP(+). Functionally, conversion of NADPH, generated by peripheral catabolic pathways, to NADH, which can enter the respiratory chain for energy generation. This is Soluble pyridine nucleotide transhydrogenase from Pseudomonas entomophila (strain L48).